The following is a 401-amino-acid chain: Ribosomal RNA dihydrouridine synthase (401 aa).

FAD-binding residues include Ala-15, Asp-34, Asn-35, Arg-41, Gly-47, Asn-52, Val-132, Glu-371, and Phe-384.

The protein belongs to the BaiN/RdsA family. RdsA subfamily. FAD is required as a cofactor.

The catalysed reaction is a 5,6-dihydrouridine in mRNA + NAD(+) = a uridine in mRNA + NADH + H(+). Catalyzes the synthesis of 5,6-dihydrouridine (D) at position 2449 in 23S rRNA. This chain is Ribosomal RNA dihydrouridine synthase, found in Haemophilus influenzae (strain ATCC 51907 / DSM 11121 / KW20 / Rd).